The primary structure comprises 370 residues: Cell division protein DivIB (370 aa).

The interval 1 to 65 (MKKKKDEELT…SNKKGTKRIV (65 aa)) is disordered. Residues 1–74 (MKKKKDEELT…VKEQRLSRQK (74 aa)) lie on the Cytoplasmic side of the membrane. 2 stretches are compositionally biased toward basic residues: residues 25 to 34 (SRFKRKRKAT) and 47 to 63 (RNNR…GTKR). The helical transmembrane segment at 75 to 95 (LGILIGSTLIVIALFFGYFYS) threads the bilayer. At 96–370 (SISRVQKFSV…STVNTQQDID (275 aa)) the chain is on the extracellular side. Residues 98-169 (SRVQKFSVSG…GKVKIKVKEN (72 aa)) enclose the POTRA domain. The interval 295–370 (SGWTDEAKAA…STVNTQQDID (76 aa)) is disordered. Low complexity-rich tracts occupy residues 304–314 (ASESSKSAESS) and 327–342 (SESA…STET). Over residues 356 to 370 (SSNAESTVNTQQDID) the composition is skewed to polar residues.

The protein belongs to the FtsQ/DivIB family. DivIB subfamily.

The protein resides in the cell membrane. Cell division protein that may be involved in stabilizing or promoting the assembly of the division complex. The sequence is that of Cell division protein DivIB from Pediococcus pentosaceus (strain ATCC 25745 / CCUG 21536 / LMG 10740 / 183-1w).